The primary structure comprises 106 residues: Nucleoid-associated protein XOO1065 (106 aa).

Residues 80-89 (KIDAESKDRM) show a composition bias toward basic and acidic residues. Residues 80-106 (KIDAESKDRMGSATAGMQLPPGMKLPF) form a disordered region.

This sequence belongs to the YbaB/EbfC family. In terms of assembly, homodimer.

The protein localises to the cytoplasm. It is found in the nucleoid. Binds to DNA and alters its conformation. May be involved in regulation of gene expression, nucleoid organization and DNA protection. This Xanthomonas oryzae pv. oryzae (strain KACC10331 / KXO85) protein is Nucleoid-associated protein XOO1065.